The sequence spans 116 residues: Bacterial microcompartment shell protein CutR (116 aa).

The BMC circularly permuted domain maps to 10–108 (RIIQESVPGK…LEYFKNSLGF (99 aa)).

The protein belongs to the EutS/PduU family. In terms of assembly, has been crystallized in 5 structures (all are mutated, 3 have an N-terminal His-tag), most are homohexameric with a central pore. In two the homohexamer lies flat with a beta-barrel on the flat face created by the protruding N termini of the six chains. In 2 others the hexamer is not flat but has a six-fold screw axis; the screw pitch is 33.8 or 41.9 Angstroms depending on the structure. Interacts with the BMC major shell protein.

It localises to the bacterial microcompartment. Its pathway is amine and polyamine metabolism; choline degradation. Functionally, a minor shell protein of the choline degradation-specific bacterial microcompartment (BMC). Proteins such as this one with circularly permuted BMC domains may play a key role in conferring heterogeneity and flexibility in this BMC. This is Bacterial microcompartment shell protein CutR from Streptococcus intermedius (strain ATCC 27335 / DSM 20573 / CCUG 32759 / CIP 103248 / JCM 12996 / LMG 17840 / NCTC 11324 / SK54 / 1877).